The following is a 126-amino-acid chain: Large ribosomal subunit protein bL12 (126 aa).

This sequence belongs to the bacterial ribosomal protein bL12 family. Homodimer. Part of the ribosomal stalk of the 50S ribosomal subunit. Forms a multimeric L10(L12)X complex, where L10 forms an elongated spine to which 2 to 4 L12 dimers bind in a sequential fashion. Binds GTP-bound translation factors.

Forms part of the ribosomal stalk which helps the ribosome interact with GTP-bound translation factors. Is thus essential for accurate translation. The chain is Large ribosomal subunit protein bL12 from Bordetella petrii (strain ATCC BAA-461 / DSM 12804 / CCUG 43448).